The primary structure comprises 673 residues: Citrate exporter 1 (673 aa).

The segment at 1–44 (MFNLNTKSSKEPEVTEVAVDSTPSSPVTRESSPESSPDNSAVDL) is disordered. Positions 21-39 (STPSSPVTRESSPESSPDN) are enriched in polar residues. The helical transmembrane segment at 67-87 (FLVFGAMAFCMLVSFMDQNGI) threads the bilayer. N99 is a glycosylation site (N-linked (GlcNAc...) asparagine). The next 4 helical transmembrane spans lie at 103–123 (TISW…VLYG), 133–153 (LVFM…ACAQ), 164–184 (FSGI…SDIV), and 194–214 (GILG…GAAF). The N-linked (GlcNAc...) asparagine glycan is linked to N217. 8 helical membrane-spanning segments follow: residues 222–242 (AIFY…FFIL), 261–281 (PGLF…AGGG), 292–312 (ISML…EGFF), 322–342 (IFGT…GIAY), 364–384 (AAGM…ISGQ), 393–413 (LEVI…KCFW), 419–439 (MALL…CFQP), and 465–485 (SFGG…SLKA). A glycan (N-linked (GlcNAc...) asparagine) is linked at N526. Residues 529–549 (HTVFVFLCPIVGACLLVTVFV) traverse the membrane as a helical segment. Residues 564 to 596 (AKTVEDKDKDESGTDCEDMTKGEVLVSEKEGKL) are compositionally biased toward basic and acidic residues. Disordered regions lie at residues 564 to 608 (AKTV…MHFG) and 636 to 673 (FPPM…IQEE). N-linked (GlcNAc...) asparagine glycosylation is found at N599 and N662.

It belongs to the major facilitator superfamily.

The protein resides in the cell membrane. The enzyme catalyses citrate(in) = citrate(out). Functionally, transmembrane transporter that exports citrate across the cell membrane. This Yarrowia lipolytica (strain CLIB 122 / E 150) (Yeast) protein is Citrate exporter 1.